A 56-amino-acid chain; its full sequence is Ribosome modulation factor (56 aa).

It belongs to the ribosome modulation factor family.

It localises to the cytoplasm. Its function is as follows. During stationary phase, converts 70S ribosomes to an inactive dimeric form (100S ribosomes). This is Ribosome modulation factor from Proteus mirabilis (strain HI4320).